The following is a 101-amino-acid chain: Integration host factor subunit alpha (101 aa).

The protein belongs to the bacterial histone-like protein family. In terms of assembly, heterodimer of an alpha and a beta chain.

Its function is as follows. This protein is one of the two subunits of integration host factor, a specific DNA-binding protein that functions in genetic recombination as well as in transcriptional and translational control. This chain is Integration host factor subunit alpha, found in Alkalilimnicola ehrlichii (strain ATCC BAA-1101 / DSM 17681 / MLHE-1).